The following is a 927-amino-acid chain: GPI inositol-deacylase (927 aa).

The Cytoplasmic segment spans residues 1-4 (MNPL). The helical transmembrane segment at 5 to 25 (SAVFNSVVLVLLALGVTDVFF) threads the bilayer. Over 26-595 (SYESSRCSMT…QIVRFHGIYL (570 aa)) the chain is Lumenal. N-linked (GlcNAc...) asparagine glycosylation is found at asparagine 75 and asparagine 155. Serine 169 is an active-site residue. 6 N-linked (GlcNAc...) asparagine glycosylation sites follow: asparagine 230, asparagine 362, asparagine 397, asparagine 432, asparagine 444, and asparagine 482. The chain crosses the membrane as a helical span at residues 596-616 (PVYIVANLLLAYGAQLHSILI). At 617 to 672 (QGSCMDLDLSFDVAAKPYKVDPVLIICKYLLNYKWFKNYWDGLMLPQLDAVQLHAY) the chain is on the cytoplasmic side. Residues 673-693 (GFWFPLASLFFFIFGTSIAYW) form a helical membrane-spanning segment. The Lumenal portion of the chain corresponds to 694 to 733 (SSIGLQAAVRILSSLWIYLKRPSMFPKESKCITYRVYAET). A helical transmembrane segment spans residues 734–754 (LFFAFISWRSCGTFSLLLVFL). The Cytoplasmic segment spans residues 755–821 (RYLSKVLILY…KALDDCLKMH (67 aa)). The helical transmembrane segment at 822–842 (FTILHLNLWIVLLGLPSFIYW) threads the bilayer. The Lumenal portion of the chain corresponds to 843 to 858 (LKTLRYTIQLDPDPNR). Residues 859 to 879 (VSALVLIFILEILMNSTTSAI) form a helical membrane-spanning segment. Over 880–887 (KSSVCLKT) the chain is Cytoplasmic. A helical membrane pass occupies residues 888–908 (AAVLQLPLSIIVVAFGTLHLY). At 909-927 (RISNLIAFSLFLHVVCCFV) the chain is on the lumenal side.

Belongs to the GPI inositol-deacylase family.

It localises to the endoplasmic reticulum membrane. Functionally, GPI inositol-deacylase that catalyzes the remove of the acyl chain linked to the 2-OH position of inositol ring from the GPI-anchored protein (GPI-AP) in the endoplasmic reticulum. Initiates the post-attachment remodeling phase of GPI-AP biogenesis and participates in endoplasmic reticulum (ER)-to-Golgi transport of GPI-anchored protein. The sequence is that of GPI inositol-deacylase from Xenopus laevis (African clawed frog).